The chain runs to 1183 residues: Atrophin-1 (1183 aa).

3 disordered regions span residues 1–603, 617–760, and 780–855; these read MKTR…ITTS, SPAG…ARFN, and LEGS…HRPP. The Nuclear localization signal signature appears at 16–32; the sequence is RKKEAPGPREELRSRGR. Residues 17-29 show a composition bias toward basic and acidic residues; the sequence is KKEAPGPREELRS. Residue S34 is modified to Phosphoserine. Positions 45 to 63 are enriched in basic and acidic residues; sequence GKAEKSRQTAKKARVEETS. S77, S79, S100, S102, and S106 each carry phosphoserine. A compositionally biased stretch (basic and acidic residues) spans 107-127; it reads LDGRSINDDGSSDPRDIDQDN. The segment covering 128–151 has biased composition (polar residues); that stretch reads RSTSPSIYSPGSVENDSDSSSGLS. Composition is skewed to pro residues over residues 157-173 and 207-218; these read PYHP…PPDS and GPPPGAPPPHPQ. The span at 261-272 shows a compositional bias: low complexity; sequence IPISSSGASGAP. Residues 344 to 373 show a composition bias toward pro residues; the sequence is PPGPEKGPTLAPSPHPLPPASSSAPGPPMR. Positions 377–400 are enriched in low complexity; sequence SSCSSSSVAASSSSSAATSQYPAS. A compositionally biased stretch (polar residues) spans 415–436; that stretch reads SMSVSNQPPKYTQPSLPSQAVW. The involved in binding BAIAP2 stretch occupies residues 510–560; the sequence is HPLESSNSHHAHPYNMSPSLGSLRPYPPGPAHLPPSHGQVSYSQAGPNGPP. A compositionally biased stretch (low complexity) spans 562–584; sequence SSSSNSSGSSSQAAYSCSHPSSS. At S625 the chain carries Phosphoserine. K634 is subject to N6-acetyllysine. T646 bears the Phosphothreonine mark. Phosphoserine is present on S654. Phosphothreonine is present on T662. 2 stretches are compositionally biased toward pro residues: residues 701–711 and 732–745; these read LPPPPAAPTTG and SPVP…PPPK. Phosphoserine; by MAPK8 is present on S732. Residues S739 and S741 each carry the phosphoserine modification. Over residues 788-832 the composition is skewed to basic and acidic residues; the sequence is KRADLVEKVRREAEQRAREEKEREREREREKEREREKERELERSV. A required for interaction with FAT1 region spans residues 872 to 887; it reads DTPALRTLSEYARPHV. The residue at position 889 (S889) is a Phosphoserine. A disordered region spans residues 921–940; it reads PAAREREREARERDLRDRLK. Basic and acidic residues predominate over residues 922–940; it reads AAREREREARERDLRDRLK. A Nuclear export signal motif is present at residues 1026-1034; it reads ALGNDPLAR. Position 1108 is an asymmetric dimethylarginine (R1108). A Glycyl lysine isopeptide (Lys-Gly) (interchain with G-Cter in SUMO2) cross-link involves residue K1176.

Interacts with NR2E1; the interaction represses the transcriptional activity of NR2E1. Interact (via its N-terminus) with FAT1 (via a C-terminal domain). Interacts with BAIAP2, WWP1, WWP2, WWP3 and RERE. Interacts (via its N-terminus) with MTG8; the interaction enhances transcriptional repression of MTG8. Interacts with PQBP1. Post-translationally, phosphorylated in vitro by MAPK8/JNK1 on Ser-732. In terms of tissue distribution, predominant neuronal expression, Expressed in most brain regions including striatum, hippocampus, cerebral cortex, diencephalon, brain stem and cerebellum. Highest levels in cerebellum. Also highly expressed in kidney and testis, low expression in skeletal muscle and heart.

The protein resides in the nucleus. It localises to the cytoplasm. Its subcellular location is the perinuclear region. The protein localises to the cell junction. In terms of biological role, transcriptional corepressor. Recruits NR2E1 to repress transcription. Promotes vascular smooth cell (VSMC) migration and orientation. Corepressor of MTG8 transcriptional repression. Has some intrinsic repression activity. This Rattus norvegicus (Rat) protein is Atrophin-1 (Atn1).